The sequence spans 482 residues: tRNA sulfurtransferase (482 aa).

The THUMP domain maps to 61 to 165 (LTIRDALTRI…DDRLLLIKGR (105 aa)). ATP contacts are provided by residues 183-184 (LI), Lys265, Gly287, and Gln296. Cys344 and Cys456 are joined by a disulfide. The Rhodanese domain occupies 404–482 (FGPNDVILDI…GFNNVKVYRP (79 aa)). Cys456 (cysteine persulfide intermediate) is an active-site residue.

This sequence belongs to the ThiI family.

It localises to the cytoplasm. The catalysed reaction is [ThiI sulfur-carrier protein]-S-sulfanyl-L-cysteine + a uridine in tRNA + 2 reduced [2Fe-2S]-[ferredoxin] + ATP + H(+) = [ThiI sulfur-carrier protein]-L-cysteine + a 4-thiouridine in tRNA + 2 oxidized [2Fe-2S]-[ferredoxin] + AMP + diphosphate. It carries out the reaction [ThiS sulfur-carrier protein]-C-terminal Gly-Gly-AMP + S-sulfanyl-L-cysteinyl-[cysteine desulfurase] + AH2 = [ThiS sulfur-carrier protein]-C-terminal-Gly-aminoethanethioate + L-cysteinyl-[cysteine desulfurase] + A + AMP + 2 H(+). It participates in cofactor biosynthesis; thiamine diphosphate biosynthesis. Catalyzes the ATP-dependent transfer of a sulfur to tRNA to produce 4-thiouridine in position 8 of tRNAs, which functions as a near-UV photosensor. Also catalyzes the transfer of sulfur to the sulfur carrier protein ThiS, forming ThiS-thiocarboxylate. This is a step in the synthesis of thiazole, in the thiamine biosynthesis pathway. The sulfur is donated as persulfide by IscS. The sequence is that of tRNA sulfurtransferase from Shigella flexneri.